We begin with the raw amino-acid sequence, 523 residues long: Acetyl-coenzyme A carboxylase carboxyl transferase subunit beta, chloroplastic (523 aa).

A CoA carboxyltransferase N-terminal domain is found at 224–523 (FWVICENCHK…FVPSNQNSIK (300 aa)). Positions 228, 231, 247, and 250 each coordinate Zn(2+). A C4-type zinc finger spans residues 228 to 250 (CENCHKFNYKRLFKSKMNICEEC).

Belongs to the AccD/PCCB family. In terms of assembly, acetyl-CoA carboxylase is a heterohexamer composed of biotin carboxyl carrier protein, biotin carboxylase and 2 subunits each of ACCase subunit alpha and ACCase plastid-coded subunit beta (accD). The cofactor is Zn(2+).

The protein localises to the plastid. It localises to the chloroplast stroma. The catalysed reaction is N(6)-carboxybiotinyl-L-lysyl-[protein] + acetyl-CoA = N(6)-biotinyl-L-lysyl-[protein] + malonyl-CoA. The protein operates within lipid metabolism; malonyl-CoA biosynthesis; malonyl-CoA from acetyl-CoA: step 1/1. Its function is as follows. Component of the acetyl coenzyme A carboxylase (ACC) complex. Biotin carboxylase (BC) catalyzes the carboxylation of biotin on its carrier protein (BCCP) and then the CO(2) group is transferred by the transcarboxylase to acetyl-CoA to form malonyl-CoA. This is Acetyl-coenzyme A carboxylase carboxyl transferase subunit beta, chloroplastic from Cucumis sativus (Cucumber).